The chain runs to 65 residues: MPKQKTHRASAKRFKRTGSGGLKRFRAFTSHRFHGKTKKQRRHLRKAGMVHAGDFKRIKAMVTGL.

The span at 1–16 (MPKQKTHRASAKRFKR) shows a compositional bias: basic residues. The tract at residues 1–20 (MPKQKTHRASAKRFKRTGSG) is disordered.

The protein belongs to the bacterial ribosomal protein bL35 family.

This chain is Large ribosomal subunit protein bL35, found in Streptococcus equi subsp. equi (strain 4047).